The sequence spans 243 residues: Triosephosphate isomerase (243 aa).

9 to 11 (NWK) is a binding site for substrate. Catalysis depends on His96, which acts as the Electrophile. Catalysis depends on Glu165, which acts as the Proton acceptor. Substrate is bound by residues Gly171, Ser204, and 225–226 (GG).

The protein belongs to the triosephosphate isomerase family. In terms of assembly, homodimer.

It localises to the cytoplasm. It catalyses the reaction D-glyceraldehyde 3-phosphate = dihydroxyacetone phosphate. It participates in carbohydrate biosynthesis; gluconeogenesis. The protein operates within carbohydrate degradation; glycolysis; D-glyceraldehyde 3-phosphate from glycerone phosphate: step 1/1. Functionally, involved in the gluconeogenesis. Catalyzes stereospecifically the conversion of dihydroxyacetone phosphate (DHAP) to D-glyceraldehyde-3-phosphate (G3P). The protein is Triosephosphate isomerase of Nostoc punctiforme (strain ATCC 29133 / PCC 73102).